A 140-amino-acid chain; its full sequence is Large-conductance mechanosensitive channel (140 aa).

Helical transmembrane passes span 14 to 34 and 85 to 105; these read VMDL…TGSL and GAFV…FLLV.

The protein belongs to the MscL family. As to quaternary structure, homopentamer.

The protein localises to the cell inner membrane. Its function is as follows. Channel that opens in response to stretch forces in the membrane lipid bilayer. May participate in the regulation of osmotic pressure changes within the cell. This is Large-conductance mechanosensitive channel from Sphingopyxis alaskensis (strain DSM 13593 / LMG 18877 / RB2256) (Sphingomonas alaskensis).